A 178-amino-acid chain; its full sequence is Crossover junction endodeoxyribonuclease RuvC (178 aa).

Active-site residues include Asp-11, Glu-71, and Asp-143. Mg(2+)-binding residues include Asp-11, Glu-71, and Asp-143.

Belongs to the RuvC family. As to quaternary structure, homodimer which binds Holliday junction (HJ) DNA. The HJ becomes 2-fold symmetrical on binding to RuvC with unstacked arms; it has a different conformation from HJ DNA in complex with RuvA. In the full resolvosome a probable DNA-RuvA(4)-RuvB(12)-RuvC(2) complex forms which resolves the HJ. It depends on Mg(2+) as a cofactor.

The protein resides in the cytoplasm. It catalyses the reaction Endonucleolytic cleavage at a junction such as a reciprocal single-stranded crossover between two homologous DNA duplexes (Holliday junction).. Functionally, the RuvA-RuvB-RuvC complex processes Holliday junction (HJ) DNA during genetic recombination and DNA repair. Endonuclease that resolves HJ intermediates. Cleaves cruciform DNA by making single-stranded nicks across the HJ at symmetrical positions within the homologous arms, yielding a 5'-phosphate and a 3'-hydroxyl group; requires a central core of homology in the junction. The consensus cleavage sequence is 5'-(A/T)TT(C/G)-3'. Cleavage occurs on the 3'-side of the TT dinucleotide at the point of strand exchange. HJ branch migration catalyzed by RuvA-RuvB allows RuvC to scan DNA until it finds its consensus sequence, where it cleaves and resolves the cruciform DNA. This is Crossover junction endodeoxyribonuclease RuvC from Neisseria meningitidis serogroup C / serotype 2a (strain ATCC 700532 / DSM 15464 / FAM18).